A 360-amino-acid chain; its full sequence is Nicotinate-nucleotide--dimethylbenzimidazole phosphoribosyltransferase (360 aa).

Catalysis depends on Glu327, which acts as the Proton acceptor.

The protein belongs to the CobT family.

It carries out the reaction 5,6-dimethylbenzimidazole + nicotinate beta-D-ribonucleotide = alpha-ribazole 5'-phosphate + nicotinate + H(+). It participates in nucleoside biosynthesis; alpha-ribazole biosynthesis; alpha-ribazole from 5,6-dimethylbenzimidazole: step 1/2. Its function is as follows. Catalyzes the synthesis of alpha-ribazole-5'-phosphate from nicotinate mononucleotide (NAMN) and 5,6-dimethylbenzimidazole (DMB). This Shewanella baltica (strain OS155 / ATCC BAA-1091) protein is Nicotinate-nucleotide--dimethylbenzimidazole phosphoribosyltransferase.